The primary structure comprises 184 residues: Mitochondrial import inner membrane translocase subunit Tim22 (184 aa).

2 cysteine pairs are disulfide-bonded: cysteine 59-cysteine 131 and cysteine 150-cysteine 169. 3 helical membrane passes run alanine 64–isoleucine 84, tyrosine 115–valine 133, and alanine 160–aspartate 180.

The protein belongs to the Tim17/Tim22/Tim23 family. In terms of assembly, core component of the TIM22 complex.

The protein localises to the mitochondrion inner membrane. Essential core component of the TIM22 complex, a complex that mediates the import and insertion of multi-pass transmembrane proteins into the mitochondrial inner membrane. In the TIM22 complex, it constitutes the voltage-activated and signal-gated channel. Forms a twin-pore translocase that uses the membrane potential as external driving force in 2 voltage-dependent steps. This Xenopus laevis (African clawed frog) protein is Mitochondrial import inner membrane translocase subunit Tim22 (timm22).